The chain runs to 312 residues: Tetraacyldisaccharide 4'-kinase (312 aa).

60–67 contacts ATP; it reads IAGGSGKT.

Belongs to the LpxK family.

The enzyme catalyses a lipid A disaccharide + ATP = a lipid IVA + ADP + H(+). The protein operates within glycolipid biosynthesis; lipid IV(A) biosynthesis; lipid IV(A) from (3R)-3-hydroxytetradecanoyl-[acyl-carrier-protein] and UDP-N-acetyl-alpha-D-glucosamine: step 6/6. Its function is as follows. Transfers the gamma-phosphate of ATP to the 4'-position of a tetraacyldisaccharide 1-phosphate intermediate (termed DS-1-P) to form tetraacyldisaccharide 1,4'-bis-phosphate (lipid IVA). In Helicobacter pylori (strain HPAG1), this protein is Tetraacyldisaccharide 4'-kinase.